The following is a 455-amino-acid chain: Bifunctional protein GlmU (455 aa).

Residues 1–228 form a pyrophosphorylase region; it reads MNNTLTTIIL…EFEIEGVNNR (228 aa). UDP-N-acetyl-alpha-D-glucosamine-binding positions include 10 to 13, Lys24, Gln75, 80 to 81, 102 to 104, Gly138, Glu153, Asn168, and Asn226; these read LAAG, GT, and YGD. Asp104 lines the Mg(2+) pocket. A Mg(2+)-binding site is contributed by Asn226. The tract at residues 229–249 is linker; it reads QQLAQLERKWQAKLVEDLQVQ. An N-acetyltransferase region spans residues 250 to 455; the sequence is GVQFADPNRV…DNYQRPEKKK (206 aa). Residues Arg332 and Lys350 each contribute to the UDP-N-acetyl-alpha-D-glucosamine site. His362 functions as the Proton acceptor in the catalytic mechanism. Tyr365 and Asn376 together coordinate UDP-N-acetyl-alpha-D-glucosamine. Acetyl-CoA is bound by residues Ala379, 385-386, Ala422, and Arg439; that span reads NY.

It in the N-terminal section; belongs to the N-acetylglucosamine-1-phosphate uridyltransferase family. This sequence in the C-terminal section; belongs to the transferase hexapeptide repeat family. In terms of assembly, homotrimer. It depends on Mg(2+) as a cofactor.

Its subcellular location is the cytoplasm. The catalysed reaction is alpha-D-glucosamine 1-phosphate + acetyl-CoA = N-acetyl-alpha-D-glucosamine 1-phosphate + CoA + H(+). It carries out the reaction N-acetyl-alpha-D-glucosamine 1-phosphate + UTP + H(+) = UDP-N-acetyl-alpha-D-glucosamine + diphosphate. Its pathway is nucleotide-sugar biosynthesis; UDP-N-acetyl-alpha-D-glucosamine biosynthesis; N-acetyl-alpha-D-glucosamine 1-phosphate from alpha-D-glucosamine 6-phosphate (route II): step 2/2. It functions in the pathway nucleotide-sugar biosynthesis; UDP-N-acetyl-alpha-D-glucosamine biosynthesis; UDP-N-acetyl-alpha-D-glucosamine from N-acetyl-alpha-D-glucosamine 1-phosphate: step 1/1. It participates in bacterial outer membrane biogenesis; LPS lipid A biosynthesis. Its function is as follows. Catalyzes the last two sequential reactions in the de novo biosynthetic pathway for UDP-N-acetylglucosamine (UDP-GlcNAc). The C-terminal domain catalyzes the transfer of acetyl group from acetyl coenzyme A to glucosamine-1-phosphate (GlcN-1-P) to produce N-acetylglucosamine-1-phosphate (GlcNAc-1-P), which is converted into UDP-GlcNAc by the transfer of uridine 5-monophosphate (from uridine 5-triphosphate), a reaction catalyzed by the N-terminal domain. The protein is Bifunctional protein GlmU of Psychrobacter sp. (strain PRwf-1).